The primary structure comprises 101 residues: DNA-binding protein Fis (101 aa).

A DNA-binding region (H-T-H motif) is located at residues 77-96 (QTRAANMLGINRGTLRKKLK).

Belongs to the transcriptional regulatory Fis family. Homodimer.

Its function is as follows. Activates ribosomal RNA transcription. Plays a direct role in upstream activation of rRNA promoters. The sequence is that of DNA-binding protein Fis from Shewanella amazonensis (strain ATCC BAA-1098 / SB2B).